The sequence spans 70 residues: Large ribosomal subunit protein bL31 (70 aa).

Zn(2+) is bound by residues C16, C18, C38, and C41.

It belongs to the bacterial ribosomal protein bL31 family. Type A subfamily. As to quaternary structure, part of the 50S ribosomal subunit. Zn(2+) serves as cofactor.

Binds the 23S rRNA. The protein is Large ribosomal subunit protein bL31 of Bifidobacterium adolescentis (strain ATCC 15703 / DSM 20083 / NCTC 11814 / E194a).